Consider the following 502-residue polypeptide: ATP synthase subunit alpha (502 aa).

Residues 115 to 139 (VDGLGPVETTETRPIESPAPGVMDR) are disordered. 169-176 (GDRQTGKT) contributes to the ATP binding site.

It belongs to the ATPase alpha/beta chains family. In terms of assembly, F-type ATPases have 2 components, CF(1) - the catalytic core - and CF(0) - the membrane proton channel. CF(1) has five subunits: alpha(3), beta(3), gamma(1), delta(1), epsilon(1). CF(0) has three main subunits: a(1), b(2) and c(9-12). The alpha and beta chains form an alternating ring which encloses part of the gamma chain. CF(1) is attached to CF(0) by a central stalk formed by the gamma and epsilon chains, while a peripheral stalk is formed by the delta and b chains.

The protein localises to the cell membrane. The catalysed reaction is ATP + H2O + 4 H(+)(in) = ADP + phosphate + 5 H(+)(out). Its function is as follows. Produces ATP from ADP in the presence of a proton gradient across the membrane. The alpha chain is a regulatory subunit. In Geobacillus thermodenitrificans (strain NG80-2), this protein is ATP synthase subunit alpha.